We begin with the raw amino-acid sequence, 509 residues long: MTEKILILDFGSQYTQLIARRVRELNVYCEIHPYNKAPQIDGTVKGVILSGSPCSVREENAPDIDLSLYREKLPLLGVCYGAQLIAHKSGGTVQPSSIREYGRARLNNVHTSDDLFKEIVPDSQVWMSHGDTIVEIPSNFEILSSTETVRVAAYKVKGEDTFGIQFHPEVTHSLQGKELLRNFVVHICGCSQDWTPDAFVETTISELKAKIGTDKVVLGLSGGVDSSVAAVLIHKAIGPNLTCIFVDNGLLRKNEYEEVLNSYKHMGLNVIGVDAKKQFYKSLEGLSDPEAKRKAIGKEFIEVFDQESHKIADVKWLGQGTIYPDIIESVSVKGPSATIKSHHNVGGLPEKMKLKIVEPLNTLFKDEVRRVGKTLGIDDIILKRHPFPGPGLAIRILGDITAEKVAVLQEVDYIFISRLKEKGLYDQVWQAGAILLPVKSVGVMGDERTYENVVALRAVSSMDGMTADWIHLPYDFLADISNEIINRVKGVNRVVYDISSKPPATIEWE.

The region spanning 4-193 is the Glutamine amidotransferase type-1 domain; that stretch reads KILILDFGSQ…VVHICGCSQD (190 aa). Catalysis depends on cysteine 79, which acts as the Nucleophile. Residues histidine 167 and glutamate 169 contribute to the active site. The GMPS ATP-PPase domain occupies 194 to 384; the sequence is WTPDAFVETT…LGIDDIILKR (191 aa). An ATP-binding site is contributed by 221–227; the sequence is SGGVDSS.

Homodimer.

The catalysed reaction is XMP + L-glutamine + ATP + H2O = GMP + L-glutamate + AMP + diphosphate + 2 H(+). The protein operates within purine metabolism; GMP biosynthesis; GMP from XMP (L-Gln route): step 1/1. In terms of biological role, catalyzes the synthesis of GMP from XMP. The sequence is that of GMP synthase [glutamine-hydrolyzing] from Cytophaga hutchinsonii (strain ATCC 33406 / DSM 1761 / CIP 103989 / NBRC 15051 / NCIMB 9469 / D465).